A 426-amino-acid polypeptide reads, in one-letter code: Glutamate-1-semialdehyde 2,1-aminomutase (426 aa).

Residue Lys265 is modified to N6-(pyridoxal phosphate)lysine.

It belongs to the class-III pyridoxal-phosphate-dependent aminotransferase family. HemL subfamily. In terms of assembly, homodimer. Requires pyridoxal 5'-phosphate as cofactor.

It localises to the cytoplasm. The catalysed reaction is (S)-4-amino-5-oxopentanoate = 5-aminolevulinate. Its pathway is porphyrin-containing compound metabolism; protoporphyrin-IX biosynthesis; 5-aminolevulinate from L-glutamyl-tRNA(Glu): step 2/2. The polypeptide is Glutamate-1-semialdehyde 2,1-aminomutase (Cronobacter sakazakii (strain ATCC BAA-894) (Enterobacter sakazakii)).